A 508-amino-acid chain; its full sequence is Ras association domain-containing protein 10 (508 aa).

The region spanning 1 to 133 (MDPSEKKISV…VRFVLVRSEA (133 aa)) is the Ras-associating domain. Disordered stretches follow at residues 51–81 (RRGLTEDPSGQLELPEPPDENDEDDDDAMPP) and 186–221 (KLNRRRQQQPSSPCSSTSSSTASSCSSSARTHESAS). The segment covering 66 to 78 (EPPDENDEDDDDA) has biased composition (acidic residues). Low complexity predominate over residues 195 to 214 (PSSPCSSTSSSTASSCSSSA). Coiled-coil stretches lie at residues 235–266 (QDHTIRQQVQRLRELDREIDRYEAKVHLDRMR) and 319–358 (LEELARRCDDLVRLQEERAQQEELLERLSAEIQEELNQRW). Residues 473–508 (GLAKSCPGNDEDSDTGLSSMHSQDSDSVPPVCESLV) form a disordered region. Residues 487–498 (TGLSSMHSQDSD) show a composition bias toward polar residues.

As to expression, expressed in neural progenitor cells (at protein level).

The protein localises to the cytoplasm. The protein resides in the cytosol. It is found in the cytoskeleton. Its subcellular location is the microtubule organizing center. It localises to the centrosome. The protein localises to the spindle pole. Functionally, plays an important role in regulating embryonic neurogenesis. This chain is Ras association domain-containing protein 10 (Rassf10), found in Mus musculus (Mouse).